The primary structure comprises 128 residues: MSEQVTFQSHEDRIVGKHVFGNLYDIDPEDLNNEQLLKDLVLKAVEIAHMNLVEAKSWSFGGKKGGVSVIALIEESHIALHTWNEYNYATLDVYTCGEDSDPQAAFKFIVEALKPRRYQVFFADRSSS.

Ser-76 acts as the Schiff-base intermediate with substrate; via pyruvic acid in catalysis. Ser-76 carries the pyruvic acid (Ser); by autocatalysis modification. His-81 acts as the Proton acceptor; for processing activity in catalysis. Catalysis depends on Cys-96, which acts as the Proton donor; for catalytic activity.

It belongs to the prokaryotic AdoMetDC family. Type 1 subfamily. As to quaternary structure, heterooctamer of four alpha and four beta chains arranged as a tetramer of alpha/beta heterodimers. Requires pyruvate as cofactor. In terms of processing, is synthesized initially as an inactive proenzyme. Formation of the active enzyme involves a self-maturation process in which the active site pyruvoyl group is generated from an internal serine residue via an autocatalytic post-translational modification. Two non-identical subunits are generated from the proenzyme in this reaction, and the pyruvate is formed at the N-terminus of the alpha chain, which is derived from the carboxyl end of the proenzyme. The post-translation cleavage follows an unusual pathway, termed non-hydrolytic serinolysis, in which the side chain hydroxyl group of the serine supplies its oxygen atom to form the C-terminus of the beta chain, while the remainder of the serine residue undergoes an oxidative deamination to produce ammonia and the pyruvoyl group blocking the N-terminus of the alpha chain.

It carries out the reaction L-arginine + H(+) = agmatine + CO2. It participates in amine and polyamine biosynthesis; agmatine biosynthesis; agmatine from L-arginine: step 1/1. Its function is as follows. Specifically catalyzes the decarboxylation of L-arginine to agmatine. Has no S-adenosylmethionine decarboxylase (AdoMetDC) activity. This Metallosphaera sedula (strain ATCC 51363 / DSM 5348 / JCM 9185 / NBRC 15509 / TH2) protein is Arginine decarboxylase proenzyme.